A 484-amino-acid polypeptide reads, in one-letter code: Glutamyl-tRNA(Gln) amidotransferase subunit A (484 aa).

Active-site charge relay system residues include Lys74 and Ser149. The active-site Acyl-ester intermediate is the Ser173.

Belongs to the amidase family. GatA subfamily. Heterotrimer of A, B and C subunits.

It carries out the reaction L-glutamyl-tRNA(Gln) + L-glutamine + ATP + H2O = L-glutaminyl-tRNA(Gln) + L-glutamate + ADP + phosphate + H(+). In terms of biological role, allows the formation of correctly charged Gln-tRNA(Gln) through the transamidation of misacylated Glu-tRNA(Gln) in organisms which lack glutaminyl-tRNA synthetase. The reaction takes place in the presence of glutamine and ATP through an activated gamma-phospho-Glu-tRNA(Gln). This Prochlorococcus marinus subsp. pastoris (strain CCMP1986 / NIES-2087 / MED4) protein is Glutamyl-tRNA(Gln) amidotransferase subunit A.